The sequence spans 72 residues: Translation initiation factor IF-1 (72 aa).

Residues 1–72 (MAKEDAIELQ…SKGRIVFRAR (72 aa)) enclose the S1-like domain.

It belongs to the IF-1 family. Component of the 30S ribosomal translation pre-initiation complex which assembles on the 30S ribosome in the order IF-2 and IF-3, IF-1 and N-formylmethionyl-tRNA(fMet); mRNA recruitment can occur at any time during PIC assembly.

Its subcellular location is the cytoplasm. Functionally, one of the essential components for the initiation of protein synthesis. Stabilizes the binding of IF-2 and IF-3 on the 30S subunit to which N-formylmethionyl-tRNA(fMet) subsequently binds. Helps modulate mRNA selection, yielding the 30S pre-initiation complex (PIC). Upon addition of the 50S ribosomal subunit IF-1, IF-2 and IF-3 are released leaving the mature 70S translation initiation complex. The sequence is that of Translation initiation factor IF-1 from Aliivibrio fischeri (strain ATCC 700601 / ES114) (Vibrio fischeri).